Consider the following 458-residue polypeptide: Type III intermediate filament (458 aa).

A head region spans residues 1–100 (MEKGYKMNRS…KVNRTNEKAE (100 aa)). Residues 97 to 405 (EKAEMIELND…KLLEGEENRI (309 aa)) form the IF rod domain. The tail stretch occupies residues 406–458 (SMPLPSFGSMSLSDAMFEQQPFENRTSKKKIVIKTVETSGGDVISETTQKIED).

It belongs to the intermediate filament family.

This chain is Type III intermediate filament, found in Tetronarce californica (Pacific electric ray).